Reading from the N-terminus, the 353-residue chain is UPF0283 membrane protein YcjF (353 aa).

Helical transmembrane passes span 70–90, 100–120, and 213–233; these read MVMGGLALFGASVVGQGVQWT, VALGGCAAGALIIGAGVGSVV, and ESTLMIAVSPLALVDMAFIAW.

Belongs to the UPF0283 family.

The protein resides in the cell inner membrane. This Escherichia coli O7:K1 (strain IAI39 / ExPEC) protein is UPF0283 membrane protein YcjF.